A 454-amino-acid polypeptide reads, in one-letter code: UDP-N-acetylmuramoylalanine--D-glutamate ligase (454 aa).

ATP is bound at residue 117–123; that stretch reads GTNGKTT.

This sequence belongs to the MurCDEF family.

It is found in the cytoplasm. The catalysed reaction is UDP-N-acetyl-alpha-D-muramoyl-L-alanine + D-glutamate + ATP = UDP-N-acetyl-alpha-D-muramoyl-L-alanyl-D-glutamate + ADP + phosphate + H(+). Its pathway is cell wall biogenesis; peptidoglycan biosynthesis. Its function is as follows. Cell wall formation. Catalyzes the addition of glutamate to the nucleotide precursor UDP-N-acetylmuramoyl-L-alanine (UMA). The sequence is that of UDP-N-acetylmuramoylalanine--D-glutamate ligase from Alkaliphilus oremlandii (strain OhILAs) (Clostridium oremlandii (strain OhILAs)).